The chain runs to 61 residues: MAKLKITLRKSAAHRLPEQRKMVKEFGLNRVNSSVIKPDDAATRGVIFKLAHLVTVEEIKD.

The protein belongs to the universal ribosomal protein uL30 family. Part of the 50S ribosomal subunit.

The protein is Large ribosomal subunit protein uL30 of Latilactobacillus sakei subsp. sakei (strain 23K) (Lactobacillus sakei subsp. sakei).